Reading from the N-terminus, the 531-residue chain is Berberine bridge enzyme-like 9 (531 aa).

The N-terminal stretch at 1-23 (MTSLTTQTLIITIFLLTIPTSFA) is a signal peptide. Cys35 and Cys99 are joined by a disulfide. 7 N-linked (GlcNAc...) asparagine glycosylation sites follow: Asn76, Asn164, Asn271, Asn300, Asn314, Asn400, and Asn485. The region spanning 77 to 252 (MTRKPVAIVA…LAWKIKLVPV (176 aa)) is the FAD-binding PCMH-type domain. Residues 114–177 (HDYDGMSYLS…DLRGFPAGIC (64 aa)) constitute a cross-link (6-(S-cysteinyl)-8alpha-(pros-histidyl)-FAD (His-Cys)).

Belongs to the oxygen-dependent FAD-linked oxidoreductase family. Requires FAD as cofactor. Post-translationally, the FAD cofactor is bound via a bicovalent 6-S-cysteinyl, 8alpha-N1-histidyl FAD linkage. As to expression, accumulates in cell walls of etiolated hypocotyls.

The protein localises to the secreted. It is found in the cell wall. The chain is Berberine bridge enzyme-like 9 from Arabidopsis thaliana (Mouse-ear cress).